Consider the following 404-residue polypeptide: Mitochondrial potassium channel (404 aa).

The N-terminal 30 residues, 1-30 (MTGRSRVLAMRHVGGVSPVLVRRDLFLTRT), are a transit peptide targeting the mitochondrion. Residues 31 to 196 (LCSHGPSQPR…KERTRAERTK (166 aa)) are Mitochondrial matrix-facing. A Phosphoserine modification is found at S65. Residues 111–138 (VREAREDLESQQTKLKEVRDRLDRISRD) adopt a coiled-coil conformation. The helical transmembrane segment at 197-217 (NWSLIGSVLGALIGVAGSTYV) threads the bilayer. Topologically, residues 218–380 (NRVRLQELKA…LEAQVNRNTV (163 aa)) are mitochondrial intermembrane. The chain crosses the membrane as a helical span at residues 381-401 (YGTLVTCATFVAVLPVLYMLF). Residues 402-404 (RAS) lie on the Mitochondrial matrix side of the membrane.

In terms of assembly, the mitochondrial potassium channel (mitoK(ATP)) forms a heteromultimer.

It is found in the mitochondrion inner membrane. It catalyses the reaction K(+)(in) = K(+)(out). Channel activity inhibited by ATP via ABCB8/MITOSUR subunit. Functionally, pore-forming subunit of the mitochondrial ATP-gated potassium channel (mitoK(ATP)). Together with ATP-binding subunit ABCB8/MITOSUR of the mitoK(ATP) channel, mediates ATP-dependent K(+) currents across the mitochondrial inner membrane. An increase in ATP intracellular levels closes the channel, inhibiting K(+) transport, whereas a decrease in ATP levels enhances K(+) uptake in the mitochondrial matrix. May contribute to the homeostatic control of cellular metabolism under stress conditions by regulating the mitochondrial matrix volume. The polypeptide is Mitochondrial potassium channel (Bos taurus (Bovine)).